Reading from the N-terminus, the 115-residue chain is Superoxide reductase (115 aa).

Residues Glu14, His16, His41, His47, Cys102, and His105 each contribute to the Fe cation site.

It belongs to the desulfoferrodoxin family. In terms of assembly, homotetramer. Requires Fe cation as cofactor.

It catalyses the reaction reduced [rubredoxin] + superoxide + 2 H(+) = oxidized [rubredoxin] + H2O2. Functionally, uses electrons from reduced NADP, by way of rubredoxin and an oxidoreductase, to catalyze the reduction of superoxide to hydrogen peroxide. The sequence is that of Superoxide reductase (sorA) from Thermococcus kodakarensis (strain ATCC BAA-918 / JCM 12380 / KOD1) (Pyrococcus kodakaraensis (strain KOD1)).